The chain runs to 426 residues: Serine--tRNA ligase (426 aa).

233–235 (TSE) is a binding site for L-serine. 264–266 (RSE) is an ATP binding site. Position 287 (Glu-287) interacts with L-serine. An ATP-binding site is contributed by 351 to 354 (EISS). Ser-387 contacts L-serine.

The protein belongs to the class-II aminoacyl-tRNA synthetase family. Type-1 seryl-tRNA synthetase subfamily. Homodimer. The tRNA molecule binds across the dimer.

The protein resides in the cytoplasm. It carries out the reaction tRNA(Ser) + L-serine + ATP = L-seryl-tRNA(Ser) + AMP + diphosphate + H(+). The catalysed reaction is tRNA(Sec) + L-serine + ATP = L-seryl-tRNA(Sec) + AMP + diphosphate + H(+). It functions in the pathway aminoacyl-tRNA biosynthesis; selenocysteinyl-tRNA(Sec) biosynthesis; L-seryl-tRNA(Sec) from L-serine and tRNA(Sec): step 1/1. In terms of biological role, catalyzes the attachment of serine to tRNA(Ser). Is also able to aminoacylate tRNA(Sec) with serine, to form the misacylated tRNA L-seryl-tRNA(Sec), which will be further converted into selenocysteinyl-tRNA(Sec). In Colwellia psychrerythraea (strain 34H / ATCC BAA-681) (Vibrio psychroerythus), this protein is Serine--tRNA ligase.